We begin with the raw amino-acid sequence, 277 residues long: Protein RKD3 (277 aa).

The RWP-RK domain maps to lysine 142–lysine 226. The stretch at arginine 201 to valine 246 forms a coiled coil.

The protein localises to the nucleus. Functionally, putative transcription factor. In Arabidopsis thaliana (Mouse-ear cress), this protein is Protein RKD3 (RKD3).